The sequence spans 145 residues: Peptide methionine sulfoxide reductase MsrB (145 aa).

A MsrB domain is found at 6–129 (KNERLQQLTD…NSAALRFIPV (124 aa)). The active-site Nucleophile is the cysteine 118.

This sequence belongs to the MsrB Met sulfoxide reductase family.

It carries out the reaction L-methionyl-[protein] + [thioredoxin]-disulfide + H2O = L-methionyl-(R)-S-oxide-[protein] + [thioredoxin]-dithiol. The polypeptide is Peptide methionine sulfoxide reductase MsrB (Listeria monocytogenes serovar 1/2a (strain ATCC BAA-679 / EGD-e)).